We begin with the raw amino-acid sequence, 463 residues long: Dipeptidyl peptidase 1 (463 aa).

Residues 1–24 (MGVGPASLLAALLLLLSGDRAVRC) form the signal peptide. 3 N-linked (GlcNAc...) asparagine glycosylation sites follow: asparagine 29, asparagine 53, and asparagine 119. Disulfide bonds link cysteine 30–cysteine 118, cysteine 54–cysteine 136, cysteine 255–cysteine 298, cysteine 291–cysteine 331, and cysteine 321–cysteine 337. A propeptide spanning residues 135–230 (ACFTGKKVGT…TAEIQQKILH (96 aa)) is cleaved from the precursor. Cysteine 258 is an active-site residue. Residue asparagine 276 is glycosylated (N-linked (GlcNAc...) asparagine). Positions 302 and 304 each coordinate chloride. Tyrosine 347 is a chloride binding site. Catalysis depends on residues histidine 405 and asparagine 427.

This sequence belongs to the peptidase C1 family. As to quaternary structure, tetramer of heterotrimers consisting of exclusion domain, heavy- and light chains. It depends on chloride as a cofactor.

Its subcellular location is the lysosome. The catalysed reaction is Release of an N-terminal dipeptide, Xaa-Yaa-|-Zaa-, except when Xaa is Arg or Lys, or Yaa or Zaa is Pro.. Functionally, thiol protease. Has dipeptidylpeptidase activity. Active against a broad range of dipeptide substrates composed of both polar and hydrophobic amino acids. Proline cannot occupy the P1 position and arginine cannot occupy the P2 position of the substrate. Can act as both an exopeptidase and endopeptidase. Activates serine proteases such as elastase, cathepsin G and granzymes A and B. In Macaca fascicularis (Crab-eating macaque), this protein is Dipeptidyl peptidase 1 (CTSC).